A 750-amino-acid polypeptide reads, in one-letter code: Xylosyl- and glucuronyltransferase LARGE2s (750 aa).

Topologically, residues 1-10 (MLCPCRGKLK) are cytoplasmic. The helical; Signal-anchor for type II membrane protein transmembrane segment at 11 to 31 (LLVVSLSFVILFTWLYLLVGN) threads the bilayer. Over 32–750 (SENGRSLLLS…LKYLTAQRNI (719 aa)) the chain is Lumenal. 3 N-linked (GlcNAc...) asparagine glycosylation sites follow: Asn116, Asn142, and Asn228. Residues 132-407 (LHVACVCAGH…FLEYDGNLLR (276 aa)) form a xylosyltransferase activity region. Mn(2+) contacts are provided by Asp236 and Asp238. Asn266 is a glycosylation site (N-linked (GlcNAc...) asparagine). The glucuronyltransferase activity stretch occupies residues 408–750 (RELFGCPSQA…LKYLTAQRNI (343 aa)). Mn(2+) contacts are provided by Asp557 and Asp559.

The protein in the C-terminal section; belongs to the glycosyltransferase 49 family. This sequence in the N-terminal section; belongs to the glycosyltransferase 8 family. Mn(2+) is required as a cofactor.

It localises to the golgi apparatus membrane. The catalysed reaction is 3-O-[beta-D-GlcA-(1-&gt;3)-beta-D-Xyl-(1-&gt;4)-Rib-ol-P-Rib-ol-P-3-beta-D-GalNAc-(1-&gt;3)-beta-D-GlcNAc-(1-&gt;4)-(O-6-P-alpha-D-Man)]-Thr-[protein] + UDP-alpha-D-xylose = 3-O-[alpha-D-Xyl-(1-&gt;3)-beta-D-GlcA-(1-&gt;4)-beta-D-Xyl-(1-&gt;4)-Rib-ol-P-Rib-ol-P-3-beta-D-GalNAc-(1-&gt;3)-beta-D-GlcNAc-(1-&gt;4)-(O-6-P-alpha-D-Man)]-Thr-[protein] + UDP + H(+). The enzyme catalyses 3-O-{(1-&gt;[3)-alpha-D-Xyl-(1-&gt;3)-beta-D-GlcA-(1-&gt;](n)-4)-beta-D-Xyl-(1-&gt;4)-Rib-ol-P-Rib-ol-P-3-beta-D-GalNAc-(1-&gt;3)-beta-D-GlcNAc-(1-&gt;4)-O-6-P-alpha-D-Man}-L-Thr-[protein] + UDP-alpha-D-glucuronate = 3-O-{beta-D-GlcA-(1-&gt;[3)-alpha-D-Xyl-(1-&gt;3)-beta-D-GlcA-(1-&gt;](n)-4)-beta-D-Xyl-(1-&gt;4)-Rib-ol-P-Rib-ol-P-3-beta-D-GalNAc-(1-&gt;3)-beta-D-GlcNAc-(1-&gt;4)-O-6-P-alpha-D-Man}-L-Thr-[protein] + UDP + H(+). It catalyses the reaction 3-O-{beta-D-GlcA-(1-&gt;[3)-alpha-D-Xyl-(1-&gt;3)-beta-D-GlcA-(1-&gt;](n)-4)-beta-D-Xyl-(1-&gt;4)-Rib-ol-P-Rib-ol-P-3-beta-D-GalNAc-(1-&gt;3)-beta-D-GlcNAc-(1-&gt;4)-O-6-P-alpha-D-Man}-L-Thr-[protein] + UDP-alpha-D-xylose = 3-O-{(1-&gt;[3)-alpha-D-Xyl-(1-&gt;3)-beta-D-GlcA-(1-&gt;](n+1)-4)-beta-D-Xyl-(1-&gt;4)-Rib-ol-P-Rib-ol-P-3-beta-D-GalNAc-(1-&gt;3)-beta-D-GlcNAc-(1-&gt;4)-O-6-P-alpha-D-Man}-L-Thr-[protein] + UDP + H(+). Its pathway is protein modification; protein glycosylation. Bifunctional glycosyltransferase with both alpha-1,3-xylosyltransferase and beta-1,3-glucuronyltransferase activities involved in the maturation of alpha-dystroglycan (DAG1) by glycosylation leading to DAG1 binding to laminin G-like domain-containing extracellular proteins with high affinity and in a phosphorylated-O-mannosyl trisaccharide dependent manner. Elongates the glucuronyl-beta-1,4-xylose-beta disaccharide primer structure by adding repeating units [-3-Xylose-alpha-1,3-GlcA-beta-1-] to produce a heteropolysaccharide. Supports the maturation of DAG1 more effectively than LARGE1. In addition, can modify both heparan sulfate (HS)- and chondroitin/dermatan sulfate (CS/DS)-proteoglycans (PGs), namely GPC4, with a glycosaminoglycan (GAG)-like polysaccharide composed of xylose and glucuronic acid to confer laminin binding. In Danio rerio (Zebrafish), this protein is Xylosyl- and glucuronyltransferase LARGE2s.